Consider the following 382-residue polypeptide: tRNA(Ile)-lysidine synthase (382 aa).

An ATP-binding site is contributed by 50 to 55 (SGGRDS).

It belongs to the tRNA(Ile)-lysidine synthase family.

Its subcellular location is the cytoplasm. The catalysed reaction is cytidine(34) in tRNA(Ile2) + L-lysine + ATP = lysidine(34) in tRNA(Ile2) + AMP + diphosphate + H(+). Its function is as follows. Ligates lysine onto the cytidine present at position 34 of the AUA codon-specific tRNA(Ile) that contains the anticodon CAU, in an ATP-dependent manner. Cytidine is converted to lysidine, thus changing the amino acid specificity of the tRNA from methionine to isoleucine. The chain is tRNA(Ile)-lysidine synthase from Bifidobacterium animalis subsp. lactis (strain AD011).